We begin with the raw amino-acid sequence, 284 residues long: Pseudouridine-5'-phosphate glycosidase (284 aa).

The Proton donor role is filled by E8. Substrate contacts are provided by K69 and V89. D119 serves as a coordination point for Mn(2+). 121–123 (SQD) serves as a coordination point for substrate. Residue K140 is the Nucleophile of the active site.

Belongs to the pseudouridine-5'-phosphate glycosidase family. In terms of assembly, homotrimer. It depends on Mn(2+) as a cofactor.

The catalysed reaction is D-ribose 5-phosphate + uracil = psi-UMP + H2O. Its function is as follows. Catalyzes the reversible cleavage of pseudouridine 5'-phosphate (PsiMP) to ribose 5-phosphate and uracil. Functions biologically in the cleavage direction, as part of a pseudouridine degradation pathway. This Pseudothermotoga lettingae (strain ATCC BAA-301 / DSM 14385 / NBRC 107922 / TMO) (Thermotoga lettingae) protein is Pseudouridine-5'-phosphate glycosidase.